Consider the following 176-residue polypeptide: Negative modulator of initiation of replication (176 aa).

It belongs to the SeqA family. As to quaternary structure, homodimer. Polymerizes to form helical filaments.

It localises to the cytoplasm. In terms of biological role, negative regulator of replication initiation, which contributes to regulation of DNA replication and ensures that replication initiation occurs exactly once per chromosome per cell cycle. Binds to pairs of hemimethylated GATC sequences in the oriC region, thus preventing assembly of replication proteins and re-initiation at newly replicated origins. Repression is relieved when the region becomes fully methylated. This chain is Negative modulator of initiation of replication, found in Hamiltonella defensa subsp. Acyrthosiphon pisum (strain 5AT).